Here is a 126-residue protein sequence, read N- to C-terminus: Methylglyoxal synthase (126 aa).

The MGS-like domain maps to Met1–Thr126. Residues His10, Lys14, Thr36–Thr39, and Ser56–Gly57 each bind substrate. The Proton donor/acceptor role is filled by Asp62. His89 contributes to the substrate binding site.

It belongs to the methylglyoxal synthase family.

It carries out the reaction dihydroxyacetone phosphate = methylglyoxal + phosphate. In terms of biological role, catalyzes the formation of methylglyoxal from dihydroxyacetone phosphate. This Borrelia garinii subsp. bavariensis (strain ATCC BAA-2496 / DSM 23469 / PBi) (Borreliella bavariensis) protein is Methylglyoxal synthase.